We begin with the raw amino-acid sequence, 202 residues long: Ras-related protein Rab-24 (202 aa).

Position 14–21 (14–21 (GYASVGKT)) interacts with GTP. Positions 35-43 (THTTIGGAF) match the Effector region motif. GTP is bound by residues 61–65 (DTAGT) and 118–121 (TKLD). 2 S-geranylgeranyl cysteine lipidation sites follow: Cys-201 and Cys-202.

Belongs to the small GTPase superfamily. Rab family.

It is found in the endoplasmic reticulum-Golgi intermediate compartment. Its subcellular location is the endosome. The protein localises to the endoplasmic reticulum. It localises to the golgi apparatus. The protein resides in the membrane. In terms of biological role, may be involved in autophagy-related processes. The chain is Ras-related protein Rab-24 (rab24) from Dictyostelium discoideum (Social amoeba).